The following is a 433-amino-acid chain: uncharacterized protein (433 aa).

Its subcellular location is the virion. This is an uncharacterized protein from Acanthamoeba polyphaga (Amoeba).